We begin with the raw amino-acid sequence, 355 residues long: Heme A synthase (355 aa).

Helical transmembrane passes span 21–41, 85–102, 136–156, 173–193, 208–228, 264–284, 299–319, and 322–342; these read LARWLWAVALLVIIVVGVGGI, INLGMTLAGFKAIFFWEW, LFALTALVGLQGAIGWWMVAS, LLTALFLLAGLVWTARDLGAL, AIGVIAILFVQLLLGAWVAGL, FLIHFLHRWWSWAAAGALLLL, ALVIVVAAQMLLGIWTIVSGV, and WVAVMHQVVGAILVAVTAAAL. His-270 serves as a coordination point for heme. His-327 lines the heme pocket.

It belongs to the COX15/CtaA family. Type 2 subfamily. In terms of assembly, interacts with CtaB. It depends on heme b as a cofactor.

The protein resides in the cell membrane. The catalysed reaction is Fe(II)-heme o + 2 A + H2O = Fe(II)-heme a + 2 AH2. Its pathway is porphyrin-containing compound metabolism; heme A biosynthesis; heme A from heme O: step 1/1. Its function is as follows. Catalyzes the conversion of heme O to heme A by two successive hydroxylations of the methyl group at C8. The first hydroxylation forms heme I, the second hydroxylation results in an unstable dihydroxymethyl group, which spontaneously dehydrates, resulting in the formyl group of heme A. This is Heme A synthase from Sphingopyxis alaskensis (strain DSM 13593 / LMG 18877 / RB2256) (Sphingomonas alaskensis).